A 300-amino-acid chain; its full sequence is MDIPHIPVLYNEVLETFKDINEGYIIDCTTGFAGHSSGLLNQNQNIKLICNDQDDEALAFSKKRLEKFENGVIFNKGNFEHVIETFKDYEIRGVLADIGVSSLQLDKLERGFGFESLTLDMRMNQNQSLDAATVVNTYSQTELERIFKDYGEVREYKKVASLIVNNRPFNSSKELADFLSKKMSKGKLHPATLPFQAIRIEVNDELGVLERLFDSLEKAKLKDCIVAIISFHSLEDRIVKNYFKKWSKSCICPDNVFRCECGNNHALGKIITKKPIIPTALEIKQNPRSRSSKLRVFKFD.

Residues 33–35 (AGH), D52, F86, D97, and Q104 contribute to the S-adenosyl-L-methionine site.

Belongs to the methyltransferase superfamily. RsmH family.

It is found in the cytoplasm. It carries out the reaction cytidine(1402) in 16S rRNA + S-adenosyl-L-methionine = N(4)-methylcytidine(1402) in 16S rRNA + S-adenosyl-L-homocysteine + H(+). Specifically methylates the N4 position of cytidine in position 1402 (C1402) of 16S rRNA. The chain is Ribosomal RNA small subunit methyltransferase H from Aliarcobacter butzleri (strain RM4018) (Arcobacter butzleri).